Consider the following 391-residue polypeptide: MGESGPVVIDPRRHDAVLFGVGDALGSALASQLGQIGVGTAAFAADGPAAAADRLRVRPGRCVVVAGDPAAVEAARTAGFALVIGLAPVGRDGDGLRGAGADAVVAELEQITVRTGDRRMSQLPDASQALTGGADGLAGRHPAVFFDFDGTLSDIVDDPDAARPVAGATAALTRLAARCPVAVLSGRDLADVTKRVGVLGIWYAGSHGFELTAPDGSHHQNDDAAAAIPVLAQAAGRLRDELGAIPGVVVEHKRFGVAVHYRNAARDRVGEVAAAVRAAGRHDALRVTTGREVIELRPDLDWDKGKTLHWVIEHLRRSGSGALTPVYLGDDITDEDAFDAVRGGPVQGVPILVRHNDDGDRATAALFALDSPARAAEFTERLADQLERGEG.

Asp-147 (nucleophile) is an active-site residue. Mg(2+) contacts are provided by Asp-147, Asp-149, and Asp-330. Position 147-149 (147-149) interacts with substrate; the sequence is DFD.

Belongs to the trehalose phosphatase family. Mg(2+) serves as cofactor.

The enzyme catalyses alpha,alpha-trehalose 6-phosphate + H2O = alpha,alpha-trehalose + phosphate. Its pathway is glycan biosynthesis; trehalose biosynthesis. Its function is as follows. Removes the phosphate from trehalose 6-phosphate to produce free trehalose. The protein is Trehalose-phosphate phosphatase (otsB) of Mycolicibacterium paratuberculosis (strain ATCC BAA-968 / K-10) (Mycobacterium paratuberculosis).